A 347-amino-acid chain; its full sequence is Phosphoribosylformylglycinamidine cyclo-ligase (347 aa).

The protein belongs to the AIR synthase family.

Its subcellular location is the cytoplasm. It catalyses the reaction 2-formamido-N(1)-(5-O-phospho-beta-D-ribosyl)acetamidine + ATP = 5-amino-1-(5-phospho-beta-D-ribosyl)imidazole + ADP + phosphate + H(+). Its pathway is purine metabolism; IMP biosynthesis via de novo pathway; 5-amino-1-(5-phospho-D-ribosyl)imidazole from N(2)-formyl-N(1)-(5-phospho-D-ribosyl)glycinamide: step 2/2. This is Phosphoribosylformylglycinamidine cyclo-ligase from Bacillus cytotoxicus (strain DSM 22905 / CIP 110041 / 391-98 / NVH 391-98).